We begin with the raw amino-acid sequence, 585 residues long: A-type ATP synthase subunit A (585 aa).

237-244 (GPFGSGKT) contacts ATP.

This sequence belongs to the ATPase alpha/beta chains family. As to quaternary structure, has multiple subunits with at least A(3), B(3), C, D, E, F, H, I and proteolipid K(x).

Its subcellular location is the cell membrane. The catalysed reaction is ATP + H2O + 4 H(+)(in) = ADP + phosphate + 5 H(+)(out). Component of the A-type ATP synthase that produces ATP from ADP in the presence of a proton gradient across the membrane. The A chain is the catalytic subunit. The chain is A-type ATP synthase subunit A from Natronomonas pharaonis (strain ATCC 35678 / DSM 2160 / CIP 103997 / JCM 8858 / NBRC 14720 / NCIMB 2260 / Gabara) (Halobacterium pharaonis).